A 359-amino-acid polypeptide reads, in one-letter code: 4-galactosyl-N-acetylglucosaminide 3-alpha-L-fucosyltransferase 9 (359 aa).

The Cytoplasmic segment spans residues Met1–Pro11. Residues Phe12–Pro32 traverse the membrane as a helical; Signal-anchor for type II membrane protein segment. At Thr33–Asn359 the chain is on the lumenal side. A glycan (N-linked (GlcNAc...) asparagine) is linked at Asn62. The interval Glu63–Tyr168 is acceptor-binding. A beta-D-galactosyl-(1-&gt;4)-N-acetyl-beta-D-glucosaminyl derivative is bound at residue Gln75. Cystine bridges form between Cys82–Cys335, Cys91–Cys338, and Cys190–Cys238. Asn101 carries N-linked (GlcNAc...) asparagine glycosylation. Glu137 serves as a coordination point for a beta-D-galactosyl-(1-&gt;4)-N-acetyl-beta-D-glucosaminyl derivative. Residue Glu137 is the Nucleophile of the active site. Position 137 (Glu137) interacts with GDP-beta-L-fucose. A glycan (N-linked (GlcNAc...) asparagine) is linked at Asn153. The GDP-beta-L-fucose site is built by Tyr168, Val192, Ser194, Asn195, Arg202, Val226, Tyr241, Asn246, Tyr252, Glu255, and Lys256. Residues Gly169–Leu326 form a donor-binding region. An acceptor-binding region spans residues Pro327–Asn359.

This sequence belongs to the glycosyltransferase 10 family. In terms of assembly, homodimer. In terms of processing, N-glycosylated with complex-type N-glycans.

The protein localises to the golgi apparatus. It is found in the trans-Golgi network membrane. The protein resides in the golgi apparatus membrane. The catalysed reaction is a beta-D-galactosyl-(1-&gt;4)-N-acetyl-beta-D-glucosaminyl derivative + GDP-beta-L-fucose = a beta-D-galactosyl-(1-&gt;4)-[alpha-L-fucosyl-(1-&gt;3)]-N-acetyl-beta-D-glucosaminyl derivative + GDP + H(+). It carries out the reaction an alpha-Neu5Ac-(2-&gt;3)-beta-D-Gal-(1-&gt;4)-beta-D-GlcNAc-(1-&gt;3)-beta-D-Gal-(1-&gt;4)-beta-D-GlcNAc derivative + GDP-beta-L-fucose = an alpha-Neu5Ac-(2-&gt;3)-beta-D-Gal-(1-&gt;4)-beta-D-GlcNAc-(1-&gt;3)-beta-D-Gal-(1-&gt;4)-[alpha-L-Fuc-(1-&gt;3)]-beta-D-GlcNAc derivative + GDP + H(+). The enzyme catalyses alpha-N-glycoloylneuraminosyl-(2-&gt;3)-beta-D-galactosyl-(1-&gt;4)-N-acetyl-beta-D-glucosaminyl-(1-&gt;3)-beta-D-galactosyl-(1-&gt;4)-N-acetyl-beta-D-glucosaminyl-(1-&gt;3)-beta-D-galactosyl-(1-&gt;4)-beta-D-glucosyl-(1&lt;-&gt;1')-ceramide + GDP-beta-L-fucose = alpha-N-glycoloylneuraminosyl-(2-&gt;3)-beta-D-galactosyl-(1-&gt;4)-N-acetyl-beta-D-glucosaminyl-(1-&gt;3)-beta-D-galactosyl-(1-&gt;4)-[alpha-L-fucosyl-(1-&gt;3)]-N-acetyl-beta-D-glucosaminyl-(1-&gt;3)-beta-D-galactosyl-(1-&gt;4)-beta-D-glucosyl-(1&lt;-&gt;1')-ceramide + GDP + H(+). It catalyses the reaction alpha-D-galactosyl-(1-&gt;3)-beta-D-galactosyl-(1-&gt;4)-N-acetyl-beta-D-glucosaminyl-(1-&gt;3)-beta-D-galactosyl-(1-&gt;4)-beta-D-glucosyl-(1&lt;-&gt;1')-ceramide + GDP-beta-L-fucose = a neolactoside IV(3)-alpha-Gal,III(3)-alpha-Fuc-nLc4Cer + GDP + H(+). The catalysed reaction is a neolactoside nLc4Cer + GDP-beta-L-fucose = a neolactoside III(3)-alpha-Fuc-nLc4Cer + GDP + H(+). It carries out the reaction an N-acetyl-alpha-neuraminyl-(2-&gt;3)-beta-D-galactosyl-(1-&gt;4)-N-acetyl-beta-D-glucosaminyl derivative + GDP-beta-L-fucose = an alpha-Neu5Ac-(2-&gt;3)-beta-D-Gal-(1-&gt;4)-[alpha-L-Fuc-(1-&gt;3)]-beta-D-GlcNAc derivative + GDP + H(+). The enzyme catalyses beta-D-Gal-(1-&gt;4)-beta-D-GlcNAc-(1-&gt;3)-beta-D-Gal-(1-&gt;4)-D-Glc + GDP-beta-L-fucose = beta-D-Gal-(1-&gt;4)-[alpha-L-Fuc-(1-&gt;3)]-beta-D-GlcNAc-(1-&gt;3)-beta-D-Gal-(1-&gt;4)-D-Glc + GDP + H(+). It catalyses the reaction an alpha-L-Fuc-(1-&gt;2)-beta-D-Gal-(1-&gt;4)-beta-D-GlcNAc derivative + GDP-beta-L-fucose = an alpha-L-Fuc-(1-&gt;2)-beta-D-Gal-(1-&gt;4)-[alpha-L-Fuc-(1-&gt;3)]-beta-D-GlcNAc derivative + GDP + H(+). The protein operates within protein modification; protein glycosylation. It participates in glycolipid biosynthesis. Its activity is regulated as follows. Activated by Mn2+. Its function is as follows. Catalyzes alpha(1-&gt;3) linkage of fucosyl moiety transferred from GDP-beta-L-fucose to N-acetyl glucosamine (GlcNAc) within type 2 lactosamine (LacNAc, beta-D-Gal-(1-&gt;4)-beta-D-GlcNAc-) glycan attached to glycolipids and N- or O-linked glycoproteins. Fucosylates distal type 2 LacNAc and its fucosylated (H-type 2 LacNAc) and sialylated (sialyl-type 2 LacNAc) derivatives to form Lewis x (Lex) (CD15) and Lewis y (Ley) antigenic epitopes involved in cell adhesion and differentiation. Generates Lex epitopes in the brain, presumably playing a role in the maintenance of neuronal stemness and neurite outgrowth in progenitor neural cells. Fucosylates the internal type 2 LacNAc unit of the polylactosamine chain to form VIM-2 antigen that serves as recognition epitope for SELE. Can also modify milk oligosaccharides in particular type 2 tetrasaccharide LNnT. The polypeptide is 4-galactosyl-N-acetylglucosaminide 3-alpha-L-fucosyltransferase 9 (Cricetulus griseus (Chinese hamster)).